Consider the following 98-residue polypeptide: Large ribosomal subunit protein uL23 (98 aa).

This sequence belongs to the universal ribosomal protein uL23 family. As to quaternary structure, part of the 50S ribosomal subunit. Contacts protein L29, and trigger factor when it is bound to the ribosome.

One of the early assembly proteins it binds 23S rRNA. One of the proteins that surrounds the polypeptide exit tunnel on the outside of the ribosome. Forms the main docking site for trigger factor binding to the ribosome. This is Large ribosomal subunit protein uL23 from Streptococcus gordonii (strain Challis / ATCC 35105 / BCRC 15272 / CH1 / DL1 / V288).